The primary structure comprises 404 residues: Diaminopropionate ammonia-lyase (404 aa).

Residue lysine 78 is modified to N6-(pyridoxal phosphate)lysine.

The protein belongs to the diaminopropionate ammonia-lyase family. Homodimer. It depends on pyridoxal 5'-phosphate as a cofactor.

The catalysed reaction is (S)-2,3-diaminopropanoate + H2O + H(+) = pyruvate + 2 NH4(+). It catalyses the reaction (R)-2,3-diaminopropanoate + H2O + H(+) = pyruvate + 2 NH4(+). With respect to regulation, competitively inhibited by L- and D-alanine. Its function is as follows. Catalyzes the alpha,beta-elimination reaction of both L- and D-alpha,beta-diaminopropionate (DAP) to form pyruvate and ammonia. In vitro L- and D-isomers of serine are also degraded, though slowly; it is the only serine dehydratase which can eliminate an amino group at the beta-carbon position. In vivo L-, D- and a mixure of DL-DAP allow growth. DL-DAP is toxic in the absence of this enzyme, it may inhibit enzymes involved in the synthesis of pyruvate and aspartate, as well as amino acids derived from them. The protein is Diaminopropionate ammonia-lyase (dpaL) of Salmonella typhimurium (strain LT2 / SGSC1412 / ATCC 700720).